A 149-amino-acid chain; its full sequence is Deoxyuridine 5'-triphosphate nucleotidohydrolase (149 aa).

Residues arginine 68 to glycine 70, asparagine 81, leucine 85 to aspartate 87, and methionine 95 contribute to the substrate site.

It belongs to the dUTPase family. It depends on Mg(2+) as a cofactor.

It catalyses the reaction dUTP + H2O = dUMP + diphosphate + H(+). Its pathway is pyrimidine metabolism; dUMP biosynthesis; dUMP from dCTP (dUTP route): step 2/2. Its function is as follows. This enzyme is involved in nucleotide metabolism: it produces dUMP, the immediate precursor of thymidine nucleotides and it decreases the intracellular concentration of dUTP so that uracil cannot be incorporated into DNA. The polypeptide is Deoxyuridine 5'-triphosphate nucleotidohydrolase (Polynucleobacter asymbioticus (strain DSM 18221 / CIP 109841 / QLW-P1DMWA-1) (Polynucleobacter necessarius subsp. asymbioticus)).